Consider the following 511-residue polypeptide: Apolipoprotein N-acyltransferase (511 aa).

6 helical membrane passes run 7 to 29, 58 to 78, 90 to 110, 125 to 145, 163 to 183, and 192 to 212; these read PGWPGHLLALAAGALTPLALAPF, GWWYGFGAFGAGTSWIYVSIH, LLMLGFTAGVAFFFALPAWLW, LAFAALWLALELFRSWFLTGF, VPVGGVWLSSFVIALSAALLV, and GASLLLGLVLLLGPWAAGLYL. One can recognise a CN hydrolase domain in the interval 230–470; that stretch reads IQGNIAQELK…QGILRGEVIP (241 aa). Glutamate 269 acts as the Proton acceptor in catalysis. The active site involves lysine 330. Cysteine 382 acts as the Nucleophile in catalysis. The chain crosses the membrane as a helical span at residues 482 to 502; sequence VWPLAGLAGVLLLWALLGRQL.

The protein belongs to the CN hydrolase family. Apolipoprotein N-acyltransferase subfamily.

Its subcellular location is the cell inner membrane. The enzyme catalyses N-terminal S-1,2-diacyl-sn-glyceryl-L-cysteinyl-[lipoprotein] + a glycerophospholipid = N-acyl-S-1,2-diacyl-sn-glyceryl-L-cysteinyl-[lipoprotein] + a 2-acyl-sn-glycero-3-phospholipid + H(+). It participates in protein modification; lipoprotein biosynthesis (N-acyl transfer). Functionally, catalyzes the phospholipid dependent N-acylation of the N-terminal cysteine of apolipoprotein, the last step in lipoprotein maturation. The polypeptide is Apolipoprotein N-acyltransferase (Pseudomonas aeruginosa (strain LESB58)).